A 68-amino-acid chain; its full sequence is DNA-directed RNA polymerase subunit Rpo10 (68 aa).

Residues Cys-7, Cys-10, Cys-44, and Cys-45 each coordinate Zn(2+).

Belongs to the archaeal Rpo10/eukaryotic RPB10 RNA polymerase subunit family. As to quaternary structure, part of the RNA polymerase complex. Zn(2+) serves as cofactor.

The protein localises to the cytoplasm. The catalysed reaction is RNA(n) + a ribonucleoside 5'-triphosphate = RNA(n+1) + diphosphate. DNA-dependent RNA polymerase (RNAP) catalyzes the transcription of DNA into RNA using the four ribonucleoside triphosphates as substrates. The protein is DNA-directed RNA polymerase subunit Rpo10 of Methanococcus maripaludis (strain C7 / ATCC BAA-1331).